Consider the following 168-residue polypeptide: Photosystem I assembly protein Ycf3 (168 aa).

TPR repeat units lie at residues 35–68, 72–105, and 120–153; these read AFTY…EIDP, SYIL…NPFL, and GEQA…TPGN.

The protein belongs to the Ycf3 family.

It localises to the plastid. The protein resides in the chloroplast thylakoid membrane. Its function is as follows. Essential for the assembly of the photosystem I (PSI) complex. May act as a chaperone-like factor to guide the assembly of the PSI subunits. This is Photosystem I assembly protein Ycf3 from Phalaenopsis aphrodite subsp. formosana (Moth orchid).